Here is a 315-residue protein sequence, read N- to C-terminus: Probable cell division protein WhiA (315 aa).

The segment at residues 275–309 (NLKELGEMVPSGVVSKSGINHRLRKINEIADKIRE) is a DNA-binding region (H-T-H motif).

The protein belongs to the WhiA family.

Involved in cell division and chromosome segregation. The chain is Probable cell division protein WhiA from Brevibacillus brevis (strain 47 / JCM 6285 / NBRC 100599).